A 679-amino-acid chain; its full sequence is Methionine--tRNA ligase (679 aa).

Residues 15–25 (PYANGPVHIGH) carry the 'HIGH' region motif. Zn(2+)-binding residues include C147, C150, C160, and C163. The short motif at 332-336 (KISTS) is the 'KMSKS' region element. Position 335 (T335) interacts with ATP. The region spanning 578–679 (DFMKLDIRVG…REVKPGSEVK (102 aa)) is the tRNA-binding domain.

The protein belongs to the class-I aminoacyl-tRNA synthetase family. MetG type 1 subfamily. As to quaternary structure, homodimer. It depends on Zn(2+) as a cofactor.

Its subcellular location is the cytoplasm. It carries out the reaction tRNA(Met) + L-methionine + ATP = L-methionyl-tRNA(Met) + AMP + diphosphate. In terms of biological role, is required not only for elongation of protein synthesis but also for the initiation of all mRNA translation through initiator tRNA(fMet) aminoacylation. The protein is Methionine--tRNA ligase of Bacteroides fragilis (strain ATCC 25285 / DSM 2151 / CCUG 4856 / JCM 11019 / LMG 10263 / NCTC 9343 / Onslow / VPI 2553 / EN-2).